We begin with the raw amino-acid sequence, 119 residues long: Beta-2-microglobulin (119 aa).

An N-terminal signal peptide occupies residues 1–20 (MARFVVVALLVLLSLSGLEA). The Ig-like C1-type domain occupies 25–114 (PKIQVYSRHP…VTLSTPKTVK (90 aa)). Cys-45 and Cys-100 are joined by a disulfide.

It belongs to the beta-2-microglobulin family. Heterodimer of an alpha chain and a beta chain. Beta-2-microglobulin is the beta-chain of major histocompatibility complex class I molecules.

The protein localises to the secreted. In terms of biological role, component of the class I major histocompatibility complex (MHC). Involved in the presentation of peptide antigens to the immune system. In Aotus azarae (Azara's night monkey), this protein is Beta-2-microglobulin (B2M).